A 1218-amino-acid polypeptide reads, in one-letter code: DNA-directed RNA polymerase subunit beta' (1218 aa).

The Zn(2+) site is built by C60, C62, C75, and C78. The Mg(2+) site is built by D455, D457, and D459. 4 residues coordinate Zn(2+): C824, C897, C904, and C907. Positions 1195–1218 (ENEAQSDKSQDEQEIGEITVDMGE) are disordered.

Belongs to the RNA polymerase beta' chain family. The RNAP catalytic core consists of 2 alpha, 1 beta, 1 beta' and 1 omega subunit. When a sigma factor is associated with the core the holoenzyme is formed, which can initiate transcription. Mg(2+) is required as a cofactor. Requires Zn(2+) as cofactor.

The enzyme catalyses RNA(n) + a ribonucleoside 5'-triphosphate = RNA(n+1) + diphosphate. DNA-dependent RNA polymerase catalyzes the transcription of DNA into RNA using the four ribonucleoside triphosphates as substrates. The chain is DNA-directed RNA polymerase subunit beta' from Natranaerobius thermophilus (strain ATCC BAA-1301 / DSM 18059 / JW/NM-WN-LF).